Here is a 352-residue protein sequence, read N- to C-terminus: Nuclear receptor subfamily 1 group I member 3 (352 aa).

A DNA-binding region (nuclear receptor) is located at residues 8 to 83 (LRNCVVCGDQ…AGMRKDMILS (76 aa)). Residues 11-31 (CVVCGDQATGYHFNALTCEGC) form an NR C4-type zinc finger. Threonine 38 is subject to Phosphothreonine; by PKC. Residues 47-71 (CPFAGSCEVSKIQRRHCPACRLQKC) form an NR C4-type zinc finger. An NR LBD domain is found at 109–352 (EQEELIQTLL…MMPLLQEICS (244 aa)).

Belongs to the nuclear hormone receptor family. NR1 subfamily. Heterodimer of NR1I3 and RXR. Interacts with PSMC4. Interacts with ECT2. Directly interacts with DNAJC7; this complex may also include HSP90. Interacts with CRY1. Interacts with CRY2 in a ligand-dependent manner. In terms of processing, phosphorylated at Thr-38 by PKC, dephosphorylation of Thr-38 is required for nuclear translocation and activation.

It localises to the nucleus. It is found in the cytoplasm. Its subcellular location is the cytoskeleton. In terms of biological role, binds and transactivates the retinoic acid response elements that control expression of the retinoic acid receptor beta 2 and alcohol dehydrogenase 3 genes. Transactivates both the phenobarbital responsive element module of the human CYP2B6 gene and the CYP3A4 xenobiotic response element. This is Nuclear receptor subfamily 1 group I member 3 (NR1I3) from Macaca mulatta (Rhesus macaque).